Here is a 474-residue protein sequence, read N- to C-terminus: MSKKLHIKTWGCQMNEYDSSKMADLLGEYQGYTLTEDASEADILLLNTCSIREKAQEKVFHQLGRWKTLKDKNPNLIIGVGGCVASQEGKAIKDRAQCVDIIFGPQTLHRLPDMIEQVRRGDKAVIDISFPEIEKFDRLPEPRAEGPTAFVSIMEGCSKYCSFCVVPYTRGEEVSRPLDDIILEIAQLAEQGVREVNLLGQNVNAYRGATHDGSICSFAELLRFVAAIDGIDRIRFTTSHPIEFTQDIIDVYEDTPELVSFLHLPVQSGSDRILTAMKRGHMAIEYKSIIRRLRKAREGIQISSDFIIGFPGETKEDFADTMKLIEEIGFDHSFSFIYSARPGTPAADLPDNVDMEEKKQRLAILQDRITQQAMRYSRHMMGTVQRILVEGPSVKNPMELRGRTENNRVVNFEGLPKHIGTFVDVEIVDVYTNSLRGKFIRGEDEMDLRRSLRPAEILAKRKQDDELGVTQFKP.

The MTTase N-terminal domain occupies 3–120 (KKLHIKTWGC…LPDMIEQVRR (118 aa)). [4Fe-4S] cluster-binding residues include Cys-12, Cys-49, Cys-83, Cys-157, Cys-161, and Cys-164. In terms of domain architecture, Radical SAM core spans 143–375 (RAEGPTAFVS…QDRITQQAMR (233 aa)). The TRAM domain maps to 378–441 (RHMMGTVQRI…TNSLRGKFIR (64 aa)).

Belongs to the methylthiotransferase family. MiaB subfamily. In terms of assembly, monomer. Requires [4Fe-4S] cluster as cofactor.

Its subcellular location is the cytoplasm. It carries out the reaction N(6)-dimethylallyladenosine(37) in tRNA + (sulfur carrier)-SH + AH2 + 2 S-adenosyl-L-methionine = 2-methylsulfanyl-N(6)-dimethylallyladenosine(37) in tRNA + (sulfur carrier)-H + 5'-deoxyadenosine + L-methionine + A + S-adenosyl-L-homocysteine + 2 H(+). In terms of biological role, catalyzes the methylthiolation of N6-(dimethylallyl)adenosine (i(6)A), leading to the formation of 2-methylthio-N6-(dimethylallyl)adenosine (ms(2)i(6)A) at position 37 in tRNAs that read codons beginning with uridine. This chain is tRNA-2-methylthio-N(6)-dimethylallyladenosine synthase, found in Shewanella sp. (strain W3-18-1).